A 172-amino-acid chain; its full sequence is NADH dehydrogenase [ubiquinone] 1 alpha subcomplex subunit 8 (172 aa).

CHCH domains follow at residues 33 to 74 and 75 to 118; these read GAQC…FRQI and KRHC…LGWV. 4 short sequence motifs (cx9C motif) span residues 36–46, 56–66, 78–88, and 100–110; these read CDKPNKEFMLC, CLEEGKLVNQC, CAEPFTEYWTC, and CRKQQAQFDEC. Cystine bridges form between cysteine 36/cysteine 66, cysteine 46/cysteine 56, cysteine 78/cysteine 110, and cysteine 88/cysteine 100. Positions 133 to 159 are disordered; that stretch reads TDRPLPENPYHSRARPEPNPEVEGDLK. The segment covering 146 to 159 has biased composition (basic and acidic residues); it reads ARPEPNPEVEGDLK.

It belongs to the complex I NDUFA8 subunit family. Complex I is composed of 45 different subunits.

It is found in the mitochondrion inner membrane. The protein localises to the mitochondrion intermembrane space. It localises to the mitochondrion. Accessory subunit of the mitochondrial membrane respiratory chain NADH dehydrogenase (Complex I), that is believed not to be involved in catalysis. Complex I functions in the transfer of electrons from NADH to the respiratory chain. The immediate electron acceptor for the enzyme is believed to be ubiquinone. This chain is NADH dehydrogenase [ubiquinone] 1 alpha subcomplex subunit 8 (NDUFA8), found in Bos taurus (Bovine).